Here is a 311-residue protein sequence, read N- to C-terminus: Lipid A biosynthesis acyltransferase (311 aa).

A helical membrane pass occupies residues 19–39 (WLFWLGVAIWRSILCLPYPIL). The short motif at 134–139 (HFLTLE) is the HXXXXD motif element.

The protein belongs to the LpxL/LpxM/LpxP family.

The protein resides in the cell inner membrane. It catalyses the reaction an alpha-Kdo-(2-&gt;4)-alpha-Kdo-(2-&gt;6)-lipid IVA + a fatty acyl-[ACP] = an alpha-Kdo-(2-&gt;4)-alpha-Kdo-(2-&gt;6)-(acyl)-lipid IVA + holo-[ACP]. Its pathway is glycolipid biosynthesis; KDO(2)-lipid A biosynthesis; KDO(2)-lipid A from CMP-3-deoxy-D-manno-octulosonate and lipid IV(A): step 3/4. It functions in the pathway bacterial outer membrane biogenesis; lipopolysaccharide biosynthesis. Functionally, catalyzes the transfer of an acyl chain from an acyl-[acyl-carrier-protein] (ACP) to a Kdo(2)-lipid IV(A) to form a Kdo(2)-(acyl)-lipid IV(A). This chain is Lipid A biosynthesis acyltransferase, found in Haemophilus influenzae (strain ATCC 51907 / DSM 11121 / KW20 / Rd).